The following is a 147-amino-acid chain: Nucleoside diphosphate kinase (147 aa).

ATP is bound by residues lysine 9, phenylalanine 57, arginine 85, threonine 91, arginine 102, and asparagine 112. Catalysis depends on histidine 115, which acts as the Pros-phosphohistidine intermediate.

It belongs to the NDK family. Requires Mg(2+) as cofactor.

The protein resides in the cytoplasm. It carries out the reaction a 2'-deoxyribonucleoside 5'-diphosphate + ATP = a 2'-deoxyribonucleoside 5'-triphosphate + ADP. The catalysed reaction is a ribonucleoside 5'-diphosphate + ATP = a ribonucleoside 5'-triphosphate + ADP. Functionally, major role in the synthesis of nucleoside triphosphates other than ATP. The ATP gamma phosphate is transferred to the NDP beta phosphate via a ping-pong mechanism, using a phosphorylated active-site intermediate. The sequence is that of Nucleoside diphosphate kinase from Ignicoccus hospitalis (strain KIN4/I / DSM 18386 / JCM 14125).